A 137-amino-acid polypeptide reads, in one-letter code: Proofreading thioesterase EntH (137 aa).

The Nucleophile or proton acceptor role is filled by E63.

The protein belongs to the thioesterase PaaI family. Homotetramer. Dimer of dimers. Interacts specifically with the aryl carrier protein (ArCP) domain of EntB.

It is found in the cytoplasm. Its pathway is siderophore biosynthesis; enterobactin biosynthesis. Its function is as follows. Required for optimal enterobactin synthesis. Acts as a proofreading enzyme that prevents EntB misacylation by hydrolyzing the thioester bound existing between EntB and wrongly charged molecules. This is Proofreading thioesterase EntH from Salmonella paratyphi B (strain ATCC BAA-1250 / SPB7).